The chain runs to 696 residues: Solute carrier family 53 member 1 (696 aa).

At 1–228 (MKFAEHLSAH…RVPPLGAAQP (228 aa)) the chain is on the cytoplasmic side. The 223-residue stretch at 2–224 (KFAEHLSAHI…MKRLRVPPLG (223 aa)) folds into the SPX domain. The segment at 158–165 (KILKKHDK) is important for inositol polyphosphate binding. A helical membrane pass occupies residues 229–259 (APAWTTFRVGLFCGIFIVLNITLVFAAVFKL). Residues 260 to 264 (ETDRT) lie on the Extracellular side of the membrane. A helical membrane pass occupies residues 265–296 (VWPLIRIYRGGFLLIEFLFLLGINTYGWRQAG). Residues 297 to 309 (VNHVLIFELNPRN) are Cytoplasmic-facing. The helical transmembrane segment at 310–337 (NLSHQHLFEIAGFLGILWCLSLLACFFA) threads the bilayer. Residues 338 to 343 (PISIIP) are Extracellular-facing. A helical membrane pass occupies residues 344-365 (IYVYPLALYGFMVFFLINPTKT). Positions 366–383 (FYYKSRFWLLKLLFRVFT) form an intramembrane region, helical. Over 384–388 (APFHK) the chain is Cytoplasmic. Residues 389–422 (VGFADFWLADQLNSLSVILMDLEYMICFYSFELK) form a discontinuously helical membrane-spanning segment. Residues Asp-398 and Asn-401 each coordinate phosphate. Over 423–429 (WDESKGL) the chain is Extracellular. A discontinuously helical transmembrane segment spans residues 430 to 471 (LPNDPQGPEFCHKYTYGVRAIVQCIPAWLRFIQCLRRYRDTR). The region spanning 439 to 643 (FCHKYTYGVR…LNADDQTLLE (205 aa)) is the EXS domain. Position 472 (Arg-472) is a topological domain, cytoplasmic. Residues 473–503 (AFPHLVNAGKYSTTFFTVTFAALYSTHKEQN) traverse the membrane as a helical segment. Residues Lys-482 and Tyr-483 each coordinate phosphate. The Extracellular segment spans residues 504–506 (HPD). The helical transmembrane segment at 507–534 (YKVFFYLWVFFCIISSCYTLIWDLKMDW) threads the bilayer. The Cytoplasmic segment spans residues 535–553 (GLFDKNAGENTFLREEIVY). Residues 554–585 (PQKAYYYCAIIEDVILRFAWTIQISITVTTFK) traverse the membrane as a discontinuously helical segment. Arg-570 is a binding site for phosphate. Over 586–587 (PH) the chain is Extracellular. The chain crosses the membrane as a helical span at residues 588–626 (VGDIIATVFAPLEVFRRFVWNFFRLENEHLNNCGEFRAV). Phosphate contacts are provided by Arg-603 and Arg-604. The Cytoplasmic segment spans residues 627–696 (RDISVAPLNA…IEDTDDEANT (70 aa)). Ser-668 is subject to Phosphoserine. Residues 672 to 696 (PRLASQSKARDTKVLIEDTDDEANT) are disordered. Thr-690 carries the phosphothreonine modification.

The protein belongs to the SYG1 (TC 2.A.94) family. In terms of assembly, homodimer.

Its subcellular location is the cell membrane. It catalyses the reaction phosphate(in) = phosphate(out). Its function is as follows. Inorganic ion transporter that mediates phosphate ion export across plasma membrane. Plays a major role in phosphate homeostasis, preventing intracellular phosphate accumulation and possible calcium phosphate precipitation, ultimately preserving calcium signaling. Binds inositol hexakisphosphate (Ins6P) and similar inositol polyphosphates, such as 5-diphospho-inositol pentakisphosphate (5-InsP7), which are important intracellular signaling molecules involved in regulation of phosphate flux. In Mus pahari (Gairdner's shrew-mouse), this protein is Solute carrier family 53 member 1 (Xpr1).